Consider the following 166-residue polypeptide: uncharacterized protein (166 aa).

This is an uncharacterized protein from Orgyia pseudotsugata (Douglas-fir tussock moth).